The following is a 416-amino-acid chain: Hepatic and glial cell adhesion molecule (416 aa).

Residues 1–33 form the signal peptide; the sequence is MKRERGALSRASRALRLAPFVYLLLIQTDPLEG. Positions 34-142 constitute an Ig-like V-type domain; sequence VNITSPVRLI…GEKTINLTVD (109 aa). Topologically, residues 34–240 are extracellular; it reads VNITSPVRLI…VKITVYRRSS (207 aa). Asparagine 35, asparagine 138, asparagine 167, and asparagine 189 each carry an N-linked (GlcNAc...) asparagine glycan. In terms of domain architecture, Ig-like C2-type spans 148-234; the sequence is PQVLVASTTV…QGRSLPVKIT (87 aa). Cysteine 168 and cysteine 217 are oxidised to a cystine. A helical membrane pass occupies residues 241–261; it reads LYIILSTGGIFLLVTLVTVCA. The Cytoplasmic segment spans residues 262 to 416; sequence CWKPSKRKQK…DEAGPVEISA (155 aa). A disordered region spans residues 273-416; that stretch reads LEKQNSLEYM…DEAGPVEISA (144 aa). Serine 278 is subject to Phosphoserine. Residues 285–306 show a composition bias toward basic and acidic residues; that stretch reads NDDRLKPEADTLPRSGEQERKN. 2 positions are modified to phosphoserine: serine 350 and serine 377. Over residues 383 to 398 the composition is skewed to low complexity; that stretch reads SSPGRSRSASRTLRTA.

Homodimer. Dimer formation occurs predominantly through cis interactions on the cell surface. Part of a complex containing MLC1, TRPV4, AQP4 and ATP1B1. Interacts with CLCN2. In terms of processing, N-glycosylated.

It is found in the cytoplasm. The protein resides in the cell membrane. Its function is as follows. Involved in regulating cell motility and cell-matrix interactions. May inhibit cell growth through suppression of cell proliferation. In glia, associates and targets CLCN2 at astrocytic processes and myelinated fiber tracts where it may regulate transcellular chloride flux involved in neuron excitability. The polypeptide is Hepatic and glial cell adhesion molecule (Homo sapiens (Human)).